We begin with the raw amino-acid sequence, 516 residues long: Probable D,D-dipeptide-binding periplasmic protein DdpA (516 aa).

A signal peptide spans 1 to 25 (MKRSISFRPTLLALVLATNFPVAHA).

The protein belongs to the bacterial solute-binding protein 5 family. The complex is composed of two ATP-binding proteins (DdpD and DdpF), two transmembrane proteins (DdpB and DdpC) and a solute-binding protein (DdpA).

The protein resides in the periplasm. In terms of biological role, part of the ABC transporter complex DdpABCDF, which is probably involved in D,D-dipeptide transport. This chain is Probable D,D-dipeptide-binding periplasmic protein DdpA (ddpA), found in Escherichia coli (strain K12).